Consider the following 183-residue polypeptide: uncharacterized protein (183 aa).

The next 4 helical transmembrane spans lie at 37 to 59 (LFGY…PRQF), 79 to 98 (AILL…VTSV), 110 to 132 (WRTF…VLVL), and 142 to 161 (AFYA…TYVF).

It is found in the cell membrane. This is an uncharacterized protein from Archaeoglobus fulgidus (strain ATCC 49558 / DSM 4304 / JCM 9628 / NBRC 100126 / VC-16).